Here is a 351-residue protein sequence, read N- to C-terminus: Transmembrane protein 184 homolog DDB_G0279555 (351 aa).

The chain crosses the membrane as a helical span at residues 1 to 21 (MWIVAGVCSGVAILLSFYLIY). Asn26 is a glycosylation site (N-linked (GlcNAc...) asparagine). Transmembrane regions (helical) follow at residues 39–59 (ILIM…FVEL), 73–93 (YVLY…FDLV), 127–147 (FVLQ…VLET), 162–182 (YVWL…FLVL), and 206–226 (ILFF…FGVI). A glycan (N-linked (GlcNAc...) asparagine) is linked at Asn236. A helical membrane pass occupies residues 241-261 (LQDFITCVEMVILAICHHFFF). Asn301 and Asn304 each carry an N-linked (GlcNAc...) asparagine glycan. The tract at residues 327–351 (HNHPTTKKKDEESNLLEPEDKDIII) is disordered. The segment covering 339-351 (SNLLEPEDKDIII) has biased composition (acidic residues).

This sequence belongs to the TMEM184 family.

It localises to the cell membrane. Functionally, probable transporter. This is Transmembrane protein 184 homolog DDB_G0279555 (tmem184C) from Dictyostelium discoideum (Social amoeba).